The primary structure comprises 535 residues: CTP synthase (535 aa).

The amidoligase domain stretch occupies residues 1–267 (MTKYIFVTGG…DQIVCDHLKL (267 aa)). Ser13 provides a ligand contact to CTP. Ser13 contributes to the UTP binding site. Residue 14-19 (SLGKGI) participates in ATP binding. Position 54 (Tyr54) interacts with L-glutamine. Asp71 serves as a coordination point for ATP. Asp71 and Glu141 together coordinate Mg(2+). Residues 148-150 (DIE), 188-193 (KTKPTQ), and Lys224 each bind CTP. Residues 188–193 (KTKPTQ) and Lys224 contribute to the UTP site. 240-242 (RDA) is an ATP binding site. The Glutamine amidotransferase type-1 domain maps to 292–534 (KIALVGKYVE…VRASITNKES (243 aa)). An L-glutamine-binding site is contributed by Gly354. Cys381 serves as the catalytic Nucleophile; for glutamine hydrolysis. L-glutamine-binding positions include 382 to 385 (LGMQ), Glu405, and Arg462. Catalysis depends on residues His507 and Glu509.

It belongs to the CTP synthase family. As to quaternary structure, homotetramer.

It carries out the reaction UTP + L-glutamine + ATP + H2O = CTP + L-glutamate + ADP + phosphate + 2 H(+). The catalysed reaction is L-glutamine + H2O = L-glutamate + NH4(+). The enzyme catalyses UTP + NH4(+) + ATP = CTP + ADP + phosphate + 2 H(+). It functions in the pathway pyrimidine metabolism; CTP biosynthesis via de novo pathway; CTP from UDP: step 2/2. Allosterically activated by GTP, when glutamine is the substrate; GTP has no effect on the reaction when ammonia is the substrate. The allosteric effector GTP functions by stabilizing the protein conformation that binds the tetrahedral intermediate(s) formed during glutamine hydrolysis. Inhibited by the product CTP, via allosteric rather than competitive inhibition. Catalyzes the ATP-dependent amination of UTP to CTP with either L-glutamine or ammonia as the source of nitrogen. Regulates intracellular CTP levels through interactions with the four ribonucleotide triphosphates. The chain is CTP synthase from Bacillus cereus (strain AH820).